We begin with the raw amino-acid sequence, 186 residues long: Thioredoxin M2, chloroplastic (186 aa).

Residues 1-72 (MAAFTCTSRP…RVSRLRRAVV (72 aa)) constitute a chloroplast transit peptide. Positions 73–186 (CEAQETTTDI…LTSSLDKFLP (114 aa)) constitute a Thioredoxin domain. Residues C110 and C113 each act as nucleophile in the active site. C110 and C113 are oxidised to a cystine.

It belongs to the thioredoxin family. Plant M-type subfamily. As to quaternary structure, interacts with G6PD1 and G6PD4. Interacts with PGL3.

It is found in the plastid. It localises to the chloroplast stroma. In terms of biological role, thiol-disulfide oxidoreductase that may participate in various redox reactions. May activate NADP-malate dehydrogenase. This Arabidopsis thaliana (Mouse-ear cress) protein is Thioredoxin M2, chloroplastic.